Here is a 247-residue protein sequence, read N- to C-terminus: ATP synthase subunit a, chloroplastic (247 aa).

Transmembrane regions (helical) follow at residues 38–58 (QVLI…TIAV), 95–115 (VPFI…GALL), 134–154 (INTT…AGLT), 199–219 (LVVV…VMLL), and 220–240 (GLFT…AYIG).

This sequence belongs to the ATPase A chain family. F-type ATPases have 2 components, CF(1) - the catalytic core - and CF(0) - the membrane proton channel. CF(1) has five subunits: alpha(3), beta(3), gamma(1), delta(1), epsilon(1). CF(0) has four main subunits: a, b, b' and c.

The protein localises to the plastid. It is found in the chloroplast thylakoid membrane. Its function is as follows. Key component of the proton channel; it plays a direct role in the translocation of protons across the membrane. In Nicotiana sylvestris (Wood tobacco), this protein is ATP synthase subunit a, chloroplastic.